The primary structure comprises 480 residues: Porphobilinogen deaminase, chloroplastic (480 aa).

A chloroplast-targeting transit peptide spans 1-139; the sequence is MYCGRYETIG…VSGGRIWSLA (139 aa). Position 395 is an S-(dipyrrolylmethanemethyl)cysteine (C395).

The protein belongs to the HMBS family. Dipyrromethane serves as cofactor.

Its subcellular location is the plastid. The protein resides in the chloroplast. The catalysed reaction is 4 porphobilinogen + H2O = hydroxymethylbilane + 4 NH4(+). Its pathway is porphyrin-containing compound metabolism; protoporphyrin-IX biosynthesis; coproporphyrinogen-III from 5-aminolevulinate: step 2/4. The protein operates within porphyrin-containing compound metabolism; chlorophyll biosynthesis. In terms of biological role, tetrapolymerization of the monopyrrole PBG into the hydroxymethylbilane pre-uroporphyrinogen in several discrete steps. The protein is Porphobilinogen deaminase, chloroplastic of Euglena gracilis.